Here is a 671-residue protein sequence, read N- to C-terminus: cGMP-dependent protein kinase 1 (671 aa).

The residue at position 2 (S2) is an N-acetylserine. Positions 2 to 59 (SELEEDFAKILMLKEERIKELEKRLSEKEEEIQELKRKLHKCQSVLPVPSTHIGPRTT) form a coiled coil. The interval 2–102 (SELEEDFAKI…LIKEAILDND (101 aa)) is required for dimerization. The leucine-zipper stretch occupies residues 9–44 (AKILMLKEERIKELEKRLSEKEEEIQELKRKLHKCQ). An autoinhibitory domain region spans residues 50 to 75 (PSTHIGPRTTRAQGISAEPQTYRSFH). T59 carries the phosphothreonine; by autocatalysis modification. The segment at 103–220 (FMKNLELSQI…EYMEFLKSVP (118 aa)) is cGMP-binding, high affinity. Residues 167 to 170 (GELA) and 177 to 178 (RT) each bind 3',5'-cyclic AMP. Residues 167-170 (GELA), 177-178 (RT), R282, 291-294 (GEKA), 301-302 (RT), and Y336 contribute to the 3',5'-cyclic GMP site. The cGMP-binding, low affinity stretch occupies residues 221–341 (TFQSLPEEIL…SNKAYEDAEA (121 aa)). 3',5'-cyclic AMP-binding positions include 291–294 (GEKA), 301–302 (RT), and Y336. The Protein kinase domain occupies 360 to 619 (FNIIDTLGVG…VKDIQKHKWF (260 aa)). Residues 366–374 (LGVGGFGRV) and K390 contribute to the ATP site. D484 functions as the Proton acceptor in the catalytic mechanism. T515 carries the post-translational modification Phosphothreonine. The 52-residue stretch at 620–671 (EGFNWEGLRKGTLTPPIIPSVASPTDTSNFDSFPEDNDEPPPDDNSGWDIDF) folds into the AGC-kinase C-terminal domain. A disordered region spans residues 635 to 671 (PIIPSVASPTDTSNFDSFPEDNDEPPPDDNSGWDIDF). Residues 652-661 (FPEDNDEPPP) are compositionally biased toward acidic residues.

It belongs to the protein kinase superfamily. AGC Ser/Thr protein kinase family. cGMP subfamily. Isoform alpha: parallel homodimer or heterodimer and also heterotetramer. Interacts directly with PPP1R12A. Non-covalent dimer of dimer of PRKG1-PRKG1 and PPP1R12A-PPP1R12A. This interaction targets PRKG1 to stress fibers to mediate smooth muscle cell relaxation and vasodilation in responses to rises in cGMP. Isoform beta: antiparallel homodimer. Part of cGMP kinase signaling complex at least composed of ACTA2/alpha-actin, CNN1/calponin H1, PLN/phospholamban, PRKG1 and ITPR1. Interacts with IRAG1. Forms a stable complex with ITPR1, IRAG1, and isoform beta of PRKG1. Interacts with TRPC7 (via ankyrin repeat domain). Isoform alpha interacts with RGS2. Interacts with GTF2I. Post-translationally, autophosphorylation increases kinase activity. 65 kDa monomer is produced by proteolytic cleavage. As to expression, primarily expressed in lung and placenta.

It is found in the cytoplasm. It catalyses the reaction L-seryl-[protein] + ATP = O-phospho-L-seryl-[protein] + ADP + H(+). The enzyme catalyses L-threonyl-[protein] + ATP = O-phospho-L-threonyl-[protein] + ADP + H(+). In the absence of cGMP, PRKG1 activity is suppressed by autoinhibitory contacts. Its function is as follows. Serine/threonine protein kinase that acts as a key mediator of the nitric oxide (NO)/cGMP signaling pathway. GMP binding activates PRKG1, which phosphorylates serines and threonines on many cellular proteins. Numerous protein targets for PRKG1 phosphorylation are implicated in modulating cellular calcium, but the contribution of each of these targets may vary substantially among cell types. Proteins that are phosphorylated by PRKG1 regulate platelet activation and adhesion, smooth muscle contraction, cardiac function, gene expression, feedback of the NO-signaling pathway, and other processes involved in several aspects of the CNS like axon guidance, hippocampal and cerebellar learning, circadian rhythm and nociception. Smooth muscle relaxation is mediated through lowering of intracellular free calcium, by desensitization of contractile proteins to calcium, and by decrease in the contractile state of smooth muscle or in platelet activation. Regulates intracellular calcium levels via several pathways: phosphorylates IRAG1 and inhibits IP3-induced Ca(2+) release from intracellular stores, phosphorylation of KCNMA1 (BKCa) channels decreases intracellular Ca(2+) levels, which leads to increased opening of this channel. PRKG1 phosphorylates the canonical transient receptor potential channel (TRPC) family which inactivates the associated inward calcium current. Another mode of action of NO/cGMP/PKGI signaling involves PKGI-mediated inactivation of the Ras homolog gene family member A (RhoA). Phosphorylation of RHOA by PRKG1 blocks the action of this protein in myriad processes: regulation of RHOA translocation; decreasing contraction; controlling vesicle trafficking, reduction of myosin light chain phosphorylation resulting in vasorelaxation. Activation of PRKG1 by NO signaling also alters gene expression in a number of tissues. In smooth muscle cells, increased cGMP and PRKG1 activity influence expression of smooth muscle-specific contractile proteins, levels of proteins in the NO/cGMP signaling pathway, down-regulation of the matrix proteins osteopontin and thrombospondin-1 to limit smooth muscle cell migration and phenotype. Regulates vasodilator-stimulated phosphoprotein (VASP) functions in platelets and smooth muscle. This chain is cGMP-dependent protein kinase 1 (PRKG1), found in Homo sapiens (Human).